A 381-amino-acid chain; its full sequence is MAKKALLIGINYPGTAVELRGCVNDVHRMQKCLIELYGFANKDIVIMIDTDKSCIQPTGKNICDELDNLIASGQSGDFLVFHYSGHGTRIPPGIEDSEDPTGFDECITPCDMNLIKDQQFREMVSRVKEGCQLTIISDSCHSGGLIQEVKEQIGESHMKPVDKVKEQIEESHMKQPKLGIASYFLNIVMNLLATCGVSKSQRDRGGGEESFRGEIELEKDETLDIKTRYLPFESYLSLLKEQTGQTNIEPVRIRQTLLKLFGEDPSPNRQRGLSDLGNCEVDAGDSGASRLNAVTDNGILLSGCQTDQRSEDVYVTRTGKAYGAFSDAIQMILSAPRKDKKKITNKELVSEARVFLKKRGYSQRPGLYCHDRFVDKPFICY.

Residues H86 and C140 contribute to the active site. At C140 the chain carries S-nitrosocysteine.

Belongs to the peptidase C14B family. Proteolytically processed; by an autocatalytic mechanism.

Functionally, cysteine protease that cleaves specifically after arginine residues. Does not cleave caspase-specific substrates. May be involved in the modulation of programmed cell death activated by oxidative stress. This Arabidopsis thaliana (Mouse-ear cress) protein is Metacaspase-8 (AMC8).